The chain runs to 387 residues: Probable G-protein coupled receptor 173 (387 aa).

Over 1-40 (MANGNASSDGPGNPLAAVVSTTGGVMGGAPSSAVSTYVKL) the chain is Extracellular. N-linked (GlcNAc...) asparagine glycosylation is present at Asn-5. Residues 41 to 61 (VLLGLIICISLVGNLVVSLLV) traverse the membrane as a helical segment. Residues 62–87 (LRDRALHKAPYYFLLDLCLADTIRSA) are Cytoplasmic-facing. The helical transmembrane segment at 88 to 108 (VCFPFVLVSIKNGSAWTYSVL) threads the bilayer. At 109–111 (SCK) the chain is on the extracellular side. A disulfide bridge connects residues Cys-110 and Cys-188. Residues 112–132 (VVAFMAVLFCFHAAFMLFCIS) traverse the membrane as a helical segment. Topologically, residues 133–153 (VTRYMAIAHHRFYSKRMTFWT) are cytoplasmic. The helical transmembrane segment at 154 to 174 (CVAVVCMVWTLSVAMAFPPVF) threads the bilayer. Topologically, residues 175-202 (DVGTYKFIREEDQCIFEHRYFKANDTLG) are extracellular. Asn-198 carries an N-linked (GlcNAc...) asparagine glycan. The helical transmembrane segment at 203–223 (FMLMLAVLILATHVVYMKLLL) threads the bilayer. The Cytoplasmic segment spans residues 224–301 (FEYKHRKMKP…FKAEKQLGRM (78 aa)). Residues 302–322 (FYVITLFFLVLWSPYIVACYW) form a helical membrane-spanning segment. Residues 323–335 (RVFVKACTIPHRY) are Extracellular-facing. The chain crosses the membrane as a helical span at residues 336–356 (LSTTVWMSFAQAGVNPIICFF). Topologically, residues 357–387 (LNKDLKKGLLAHLPPCCRTPPQLPREPYCVM) are cytoplasmic.

This sequence belongs to the G-protein coupled receptor 1 family.

Its subcellular location is the cell membrane. In terms of biological role, is a receptor for the SMIM20 derived peptides Phoenixin-14 and Phoenixin-20. It mediates the Phoenixin-14 and Phoenixin-20 augmentation of gonadotropin-releasing hormone (GNRH) signaling in the hypothalamus and pituitary gland. In the ovary, it mediates the effects of Phoenixin-14 and Phoenixin-20 induced granulosa cell proliferation during follicular growth. The polypeptide is Probable G-protein coupled receptor 173 (gpr173) (Danio rerio (Zebrafish)).